The primary structure comprises 89 residues: Small ribosomal subunit protein uS15c (89 aa).

This sequence belongs to the universal ribosomal protein uS15 family. In terms of assembly, part of the 30S ribosomal subunit.

It is found in the plastid. The protein localises to the organellar chromatophore. The sequence is that of Small ribosomal subunit protein uS15c (rps15) from Paulinella chromatophora.